The sequence spans 1124 residues: Phytochrome A (1124 aa).

Low complexity predominate over residues 1 to 19 (MSTTRPSQSSNNSGRSRNS). The disordered stretch occupies residues 1 to 21 (MSTTRPSQSSNNSGRSRNSAR). The GAF domain maps to 218–401 (SMERLCDTMV…VFAIHVNKEI (184 aa)). Cys-323 serves as a coordination point for phytochromobilin. 2 consecutive PAS domains span residues 617–687 (VTSE…LQGE) and 750–821 (DYKA…VNFG). The region spanning 901 to 1120 (YMKRQIRNPL…ILSVELAAAH (220 aa)) is the Histidine kinase domain.

Belongs to the phytochrome family. Homodimer. Post-translationally, contains one covalently linked phytochromobilin chromophore.

Regulatory photoreceptor which exists in two forms that are reversibly interconvertible by light: the Pr form that absorbs maximally in the red region of the spectrum and the Pfr form that absorbs maximally in the far-red region. Photoconversion of Pr to Pfr induces an array of morphogenic responses, whereas reconversion of Pfr to Pr cancels the induction of those responses. Pfr controls the expression of a number of nuclear genes including those encoding the small subunit of ribulose-bisphosphate carboxylase, chlorophyll A/B binding protein, protochlorophyllide reductase, rRNA, etc. It also controls the expression of its own gene(s) in a negative feedback fashion. In Pisum sativum (Garden pea), this protein is Phytochrome A (PHYA).